Consider the following 381-residue polypeptide: Deoxyguanosinetriphosphate triphosphohydrolase-like protein (381 aa).

In terms of domain architecture, HD spans 76-203 (RMTHTLEVAG…ADLSDEIAYT (128 aa)).

It belongs to the dGTPase family. Type 2 subfamily.

This is Deoxyguanosinetriphosphate triphosphohydrolase-like protein from Leptospira borgpetersenii serovar Hardjo-bovis (strain JB197).